The sequence spans 554 residues: MNKKNKKLFLEALEKKFKGESPEEKKTTFYCFGGWKQSERKREFVEYAKKLAKKRGIPFYNPDIGVPLGQRKLMAYRISGTDAYVEGDDLHFVNNAAIQQMVDDIKRTVIVGMDTAHAVLEKRLGVEVTPETINEYMETINHALPGGAVVQEHMVEVHPGLVDDCYAKIFTGNDELADELDKRVLIDINKEFPEEQAEMLKKYIGNRTYQVNRVPTIVVRCCDGGTVSRWSAMQIGMSFISAYKLCAGEAAIADFSFAAKHADVIEMGTILPARRARGPNEPGGIPFGVFADIIQTSRVSDDPARISLEVIGAAATLYDQVWLGSYMSGGVGFTQYASATYTDDILDDFVYYGAEYVEDKYGFCGVKPSMEVVKDIATEVTLYGLEQYEEYPTLLEDHFGGSQRAAVVAAAAGCSTAFATGNSNAGINAWYLSQILHKEGHSRLGFYGYDLQDQCGASNSLSIRSDEGLVHELRGPNYPNYAMNVGHQPEYAGIAQAPHAARGDAFVVNPLIKVAFADNDLSFDFRWPRKEIARGALREFMPDGERTLIIPASK.

Q151 contacts coenzyme F430. Residues R229, 260–261, and R274 contribute to the coenzyme B site; that span reads KH. Coenzyme M is bound by residues Y336 and Y447.

The protein belongs to the methyl-coenzyme M reductase alpha subunit family. In terms of assembly, MCR is a hexamer of two alpha, two beta, and two gamma chains, forming a dimer of heterotrimers. Coenzyme F430 is required as a cofactor.

It carries out the reaction coenzyme B + methyl-coenzyme M = methane + coenzyme M-coenzyme B heterodisulfide. It participates in one-carbon metabolism; methyl-coenzyme M reduction; methane from methyl-coenzyme M: step 1/1. Component of the methyl-coenzyme M reductase (MCR) I that catalyzes the reductive cleavage of methyl-coenzyme M (CoM-S-CH3 or 2-(methylthio)ethanesulfonate) using coenzyme B (CoB or 7-mercaptoheptanoylthreonine phosphate) as reductant which results in the production of methane and the mixed heterodisulfide of CoB and CoM (CoM-S-S-CoB). This is the final step in methanogenesis. In Methanothermus fervidus (strain ATCC 43054 / DSM 2088 / JCM 10308 / V24 S), this protein is Methyl-coenzyme M reductase II subunit alpha (mrtA).